The sequence spans 348 residues: tRNA N6-adenosine threonylcarbamoyltransferase (348 aa).

Residues His-116 and His-120 each contribute to the Fe cation site. Residues 138-142 (IISGG), Asp-171, Gly-184, and Asn-282 contribute to the substrate site. Asp-310 contributes to the Fe cation binding site.

It belongs to the KAE1 / TsaD family. The cofactor is Fe(2+).

It is found in the cytoplasm. The catalysed reaction is L-threonylcarbamoyladenylate + adenosine(37) in tRNA = N(6)-L-threonylcarbamoyladenosine(37) in tRNA + AMP + H(+). Its function is as follows. Required for the formation of a threonylcarbamoyl group on adenosine at position 37 (t(6)A37) in tRNAs that read codons beginning with adenine. Is involved in the transfer of the threonylcarbamoyl moiety of threonylcarbamoyl-AMP (TC-AMP) to the N6 group of A37, together with TsaE and TsaB. TsaD likely plays a direct catalytic role in this reaction. The sequence is that of tRNA N6-adenosine threonylcarbamoyltransferase from Ehrlichia ruminantium (strain Welgevonden).